The sequence spans 447 residues: NADH-ubiquinone oxidoreductase chain 4 (447 aa).

The next 13 helical transmembrane spans lie at 28-48 (IFLA…FCDI), 56-76 (MISY…LMAS), 85-105 (YVNL…FTFS), 110-130 (FMFY…ILGW), 141-161 (IYLL…IFYI), 183-203 (FLYL…LVHL), 213-233 (PVSG…YGLL), 246-266 (FNYI…LICL), 273-293 (ALIA…LMTM), 301-321 (SYTL…LANI), 343-365 (SLSL…LNLL), 380-400 (LTMI…LYLF), and 409-431 (YSGV…LHWL).

Belongs to the complex I subunit 4 family.

The protein localises to the mitochondrion membrane. The catalysed reaction is a ubiquinone + NADH + 5 H(+)(in) = a ubiquinol + NAD(+) + 4 H(+)(out). Core subunit of the mitochondrial membrane respiratory chain NADH dehydrogenase (Complex I) that is believed to belong to the minimal assembly required for catalysis. Complex I functions in the transfer of electrons from NADH to the respiratory chain. The immediate electron acceptor for the enzyme is believed to be ubiquinone. The sequence is that of NADH-ubiquinone oxidoreductase chain 4 from Aedes aegypti (Yellowfever mosquito).